We begin with the raw amino-acid sequence, 245 residues long: tRNA1(Val) (adenine(37)-N6)-methyltransferase (245 aa).

Belongs to the methyltransferase superfamily. tRNA (adenine-N(6)-)-methyltransferase family.

It localises to the cytoplasm. The catalysed reaction is adenosine(37) in tRNA1(Val) + S-adenosyl-L-methionine = N(6)-methyladenosine(37) in tRNA1(Val) + S-adenosyl-L-homocysteine + H(+). Specifically methylates the adenine in position 37 of tRNA(1)(Val) (anticodon cmo5UAC). The chain is tRNA1(Val) (adenine(37)-N6)-methyltransferase from Escherichia coli O7:K1 (strain IAI39 / ExPEC).